A 261-amino-acid polypeptide reads, in one-letter code: Type III pantothenate kinase (261 aa).

ATP is bound at residue 6-13 (DAGNSNIT). Residues Tyr-100 and 107 to 110 (GADR) contribute to the substrate site. Asp-109 acts as the Proton acceptor in catalysis. Asp-129 serves as a coordination point for K(+). Thr-132 contributes to the ATP binding site. Residue Thr-184 coordinates substrate.

Belongs to the type III pantothenate kinase family. As to quaternary structure, homodimer. NH4(+) is required as a cofactor. Requires K(+) as cofactor.

The protein localises to the cytoplasm. The catalysed reaction is (R)-pantothenate + ATP = (R)-4'-phosphopantothenate + ADP + H(+). The protein operates within cofactor biosynthesis; coenzyme A biosynthesis; CoA from (R)-pantothenate: step 1/5. Catalyzes the phosphorylation of pantothenate (Pan), the first step in CoA biosynthesis. The polypeptide is Type III pantothenate kinase (Solibacter usitatus (strain Ellin6076)).